A 215-amino-acid chain; its full sequence is MKNPSVISFLIILLFAATICTHGNEPVKDTAGNPLNTREQYFIQPVKTESKNGGGLVPAAITVLPFCPLGITQTLLPYQPGLPVSFVLALGVGSTVMTSSAVNIEFKSNIWPFCKEFSKFWEVDDSSSAPKEPSILIGGKMGDRNSSFKIEKAGEGARANVYKLTTFYGTVGAIPGVWLSAPQLIITKDTAKTLLVKFKKVDDATTATSNLYFPG.

The N-terminal stretch at 1–23 (MKNPSVISFLIILLFAATICTHG) is a signal peptide. C67 and C114 are joined by a disulfide. N145 carries an N-linked (GlcNAc...) asparagine glycan.

It belongs to the protease inhibitor I3 (leguminous Kunitz-type inhibitor) family. In terms of assembly, interacts with RD21A. Interacts with RD21B and RD21C. In terms of tissue distribution, expressed in vascular bundles of the carpels, the transmitting tract of the style and septum epidermis. Expressed in etiolated seedlings.

The protein resides in the secreted. It is found in the cell wall. The protein localises to the extracellular space. Its subcellular location is the apoplast. It localises to the endoplasmic reticulum. Functionally, water-soluble and chlorophyll-binding protein that probably does not function as a chloroplast chlorophyll carrier and is not involved in photosynthesis. Involved in the control of cell death in the transmitting tract and septum epidermis during flower development. Binds and inhibits the activity of the cysteine protease RD21A as a pro-death protein. May play a role in herbivore resistance activation during seedling greening. The chain is Kunitz trypsin inhibitor 2 from Arabidopsis thaliana (Mouse-ear cress).